A 155-amino-acid chain; its full sequence is MATELTVQSERAFQKQPHIFTNPKAKANKKTKRWYKDVGLGFKTPKAAIEGSYIDKKCPFAGTVSIRGKILTGTVVSTKMHRTIIIRRDYLHYVPKYNRYEKRHKNVAAHVSPAFRVEEGDVVTVGQCRPISKTVRFNVLKVSAGASRSKKFSKF.

The protein belongs to the universal ribosomal protein uS17 family. Component of the small ribosomal subunit. Mature ribosomes consist of a small (40S) and a large (60S) subunit. The 40S subunit contains about 32 different proteins and 1 molecule of RNA (18S). The 60S subunit contains 45 different proteins and 3 molecules of RNA (25S, 5.8S and 5S).

Its subcellular location is the cytoplasm. Functionally, component of the ribosome, a large ribonucleoprotein complex responsible for the synthesis of proteins in the cell. The small ribosomal subunit (SSU) binds messenger RNAs (mRNAs) and translates the encoded message by selecting cognate aminoacyl-transfer RNA (tRNA) molecules. The large subunit (LSU) contains the ribosomal catalytic site termed the peptidyl transferase center (PTC), which catalyzes the formation of peptide bonds, thereby polymerizing the amino acids delivered by tRNAs into a polypeptide chain. The nascent polypeptides leave the ribosome through a tunnel in the LSU and interact with protein factors that function in enzymatic processing, targeting, and the membrane insertion of nascent chains at the exit of the ribosomal tunnel. In Candida albicans (strain SC5314 / ATCC MYA-2876) (Yeast), this protein is Small ribosomal subunit protein uS17.